A 64-amino-acid chain; its full sequence is Large ribosomal subunit protein bL35 (64 aa).

It belongs to the bacterial ribosomal protein bL35 family.

This is Large ribosomal subunit protein bL35 from Desulforudis audaxviator (strain MP104C).